Consider the following 369-residue polypeptide: Peptide chain release factor 2 (369 aa).

Gln251 is subject to N5-methylglutamine.

Belongs to the prokaryotic/mitochondrial release factor family. Methylated by PrmC. Methylation increases the termination efficiency of RF2.

The protein localises to the cytoplasm. Its function is as follows. Peptide chain release factor 2 directs the termination of translation in response to the peptide chain termination codons UGA and UAA. The sequence is that of Peptide chain release factor 2 (prfB) from Chlamydia pneumoniae (Chlamydophila pneumoniae).